Consider the following 81-residue polypeptide: Small ribosomal subunit protein bS16 (81 aa).

This sequence belongs to the bacterial ribosomal protein bS16 family.

This is Small ribosomal subunit protein bS16 from Clostridium beijerinckii (strain ATCC 51743 / NCIMB 8052) (Clostridium acetobutylicum).